The following is a 118-amino-acid chain: Co-chaperonin GroES (118 aa).

It belongs to the GroES chaperonin family. As to quaternary structure, heptamer of 7 subunits arranged in a ring. Interacts with the chaperonin GroEL.

Its subcellular location is the cytoplasm. Functionally, together with the chaperonin GroEL, plays an essential role in assisting protein folding. The GroEL-GroES system forms a nano-cage that allows encapsulation of the non-native substrate proteins and provides a physical environment optimized to promote and accelerate protein folding. GroES binds to the apical surface of the GroEL ring, thereby capping the opening of the GroEL channel. This Helicobacter acinonychis (strain Sheeba) protein is Co-chaperonin GroES.